The following is a 160-amino-acid chain: Ribosomal RNA large subunit methyltransferase H (160 aa).

S-adenosyl-L-methionine-binding positions include leucine 76, glycine 108, and 127–132 (LGKMTW).

The protein belongs to the RNA methyltransferase RlmH family. In terms of assembly, homodimer.

The protein localises to the cytoplasm. It catalyses the reaction pseudouridine(1915) in 23S rRNA + S-adenosyl-L-methionine = N(3)-methylpseudouridine(1915) in 23S rRNA + S-adenosyl-L-homocysteine + H(+). Its function is as follows. Specifically methylates the pseudouridine at position 1915 (m3Psi1915) in 23S rRNA. The polypeptide is Ribosomal RNA large subunit methyltransferase H (Rhizobium etli (strain CIAT 652)).